The chain runs to 261 residues: MAETTEPPSDAGTSQADAMALAAEAEAAEAEALAAAARARARAARLKREALAMAPAEDENVPEEYADWEDAEDYDDYDDYEAADQEAARSASWRRRLRVRLPRLSTIAMAAAVVIICGFTGLSGYIVWQHHEATERQQRAAAFAAGAKQGVINMTSLDFNKAKEDVARVIDSSTGEFRDDFQQRAADFTKVVEQSKVVTEGTVNATAVESMNEHSAVVLVAATSRVTNSAGAKDEPRAWRLKVTVTEEGGQYKMSKVEFVP.

Positions 1-22 (MAETTEPPSDAGTSQADAMALA) are disordered. The chain crosses the membrane as a helical span at residues 107 to 127 (IAMAAAVVIICGFTGLSGYIV).

The protein to M.tuberculosis Rv1362c.

It is found in the membrane. This is an uncharacterized protein from Mycobacterium tuberculosis (strain ATCC 25618 / H37Rv).